Consider the following 2346-residue polypeptide: Acetyl-CoA carboxylase 1 (2346 aa).

M1 is subject to N-acetylmethionine. A phosphoserine mark is found at S5, S23, S25, S29, S34, S48, S50, and S53. T58 carries the phosphothreonine modification. S78 bears the Phosphoserine mark. A Phosphoserine; by AMPK modification is found at S80. Positions 117–618 (VIEKVLIANN…GTGWLDRLIA (502 aa)) constitute a Biotin carboxylation domain. Residues 275–466 (SKRILNVPQE…LPAAQLQIAM (192 aa)) form the ATP-grasp domain. 315–320 (GGGGKG) lines the ATP pocket. Mg(2+) contacts are provided by E424, E437, and N439. E424, E437, and N439 together coordinate Mn(2+). Residue R441 is part of the active site. The residue at position 610 (T610) is a Phosphothreonine. In terms of domain architecture, Biotinyl-binding spans 745–819 (FEKENDPSVL…DPGCVIAKMQ (75 aa)). K786 carries the post-translational modification N6-biotinyllysine. Phosphoserine occurs at positions 835, 1201, 1216, and 1218. T1227 carries the phosphothreonine modification. Phosphoserine occurs at positions 1259, 1263, and 1273. An N6-acetyllysine modification is found at K1334. The 339-residue stretch at 1576 to 1914 (PYVTKDQLQS…SVYSSVPLLN (339 aa)) folds into the CoA carboxyltransferase N-terminal domain. The tract at residues 1576 to 2234 (PYVTKDQLQS…EDLVKKKIHN (659 aa)) is carboxyltransferase. R1823, K2127, and R2129 together coordinate CoA. The CoA carboxyltransferase C-terminal domain maps to 1918–2234 (PIDRVIEFVP…EDLVKKKIHN (317 aa)). The residue at position 2153 (T2153) is a Phosphothreonine.

Monomer, homodimer, and homotetramer. Can form filamentous polymers. Interacts in its inactive phosphorylated form with the BRCT domains of BRCA1 which prevents ACACA dephosphorylation and inhibits lipid synthesis. Interacts with MID1IP1; interaction with MID1IP1 promotes oligomerization and increases its activity. It depends on Mg(2+) as a cofactor. Mn(2+) is required as a cofactor. Requires biotin as cofactor. Phosphorylation on Ser-1263 is required for interaction with BRCA1. Post-translationally, phosphorylation at Ser-80 by AMPK inactivates enzyme activity. In terms of processing, the biotin cofactor is covalently attached to the central biotinyl-binding domain and is required for the catalytic activity.

It is found in the cytoplasm. Its subcellular location is the cytosol. The catalysed reaction is hydrogencarbonate + acetyl-CoA + ATP = malonyl-CoA + ADP + phosphate + H(+). It participates in lipid metabolism; malonyl-CoA biosynthesis; malonyl-CoA from acetyl-CoA: step 1/1. Its activity is regulated as follows. Inhibited by phosphorylation. Citrate promotes oligomerization of the protein into filaments that correspond to the most active form of the carboxylase. Cytosolic enzyme that catalyzes the carboxylation of acetyl-CoA to malonyl-CoA, the first and rate-limiting step of de novo fatty acid biosynthesis. This is a 2 steps reaction starting with the ATP-dependent carboxylation of the biotin carried by the biotin carboxyl carrier (BCC) domain followed by the transfer of the carboxyl group from carboxylated biotin to acetyl-CoA. This is Acetyl-CoA carboxylase 1 from Bos taurus (Bovine).